A 315-amino-acid chain; its full sequence is Transaldolase (315 aa).

The Schiff-base intermediate with substrate role is filled by lysine 125.

Belongs to the transaldolase family. Type 1 subfamily. As to quaternary structure, homodimer.

The protein localises to the cytoplasm. It carries out the reaction D-sedoheptulose 7-phosphate + D-glyceraldehyde 3-phosphate = D-erythrose 4-phosphate + beta-D-fructose 6-phosphate. Its pathway is carbohydrate degradation; pentose phosphate pathway; D-glyceraldehyde 3-phosphate and beta-D-fructose 6-phosphate from D-ribose 5-phosphate and D-xylulose 5-phosphate (non-oxidative stage): step 2/3. In terms of biological role, transaldolase is important for the balance of metabolites in the pentose-phosphate pathway. This chain is Transaldolase, found in Paracidovorax citrulli (strain AAC00-1) (Acidovorax citrulli).